The chain runs to 323 residues: Lipoyl synthase (323 aa).

7 residues coordinate [4Fe-4S] cluster: Cys69, Cys74, Cys80, Cys95, Cys99, Cys102, and Ser310. The 219-residue stretch at 81–299 folds into the Radical SAM core domain; that stretch reads WTHGTLTVMI…EAWGYELGFR (219 aa).

The protein belongs to the radical SAM superfamily. Lipoyl synthase family. It depends on [4Fe-4S] cluster as a cofactor.

The protein localises to the cytoplasm. The catalysed reaction is [[Fe-S] cluster scaffold protein carrying a second [4Fe-4S](2+) cluster] + N(6)-octanoyl-L-lysyl-[protein] + 2 oxidized [2Fe-2S]-[ferredoxin] + 2 S-adenosyl-L-methionine + 4 H(+) = [[Fe-S] cluster scaffold protein] + N(6)-[(R)-dihydrolipoyl]-L-lysyl-[protein] + 4 Fe(3+) + 2 hydrogen sulfide + 2 5'-deoxyadenosine + 2 L-methionine + 2 reduced [2Fe-2S]-[ferredoxin]. It participates in protein modification; protein lipoylation via endogenous pathway; protein N(6)-(lipoyl)lysine from octanoyl-[acyl-carrier-protein]: step 2/2. Functionally, catalyzes the radical-mediated insertion of two sulfur atoms into the C-6 and C-8 positions of the octanoyl moiety bound to the lipoyl domains of lipoate-dependent enzymes, thereby converting the octanoylated domains into lipoylated derivatives. This Thermus thermophilus (strain ATCC 27634 / DSM 579 / HB8) protein is Lipoyl synthase.